We begin with the raw amino-acid sequence, 577 residues long: Hemagglutinin-neuraminidase (577 aa).

Over 1–26 (MDRAVSQVALENDEREAKNTWRLIFR) the chain is Intravirion. Residues 27–47 (IAILLLTVVTLATSVASLVYS) traverse the membrane as a helical segment. The Virion surface portion of the chain corresponds to 48–577 (MGASTPSDLV…NDGVREARSG (530 aa)). An N-linked (GlcNAc...) asparagine; by host glycan is attached at N119. The tract at residues 124–152 (GAPIHDPDFIGGIGKELIVDDASDVTSFY) is important for interaction with fusion/F protein. Disulfide bonds link C172–C196, C186–C247, and C238–C251. The involved in neuraminidase activity stretch occupies residues 234–239 (NRKSCS). N-linked (GlcNAc...) asparagine; by host glycosylation is found at N341 and N433. 2 disulfide bridges follow: C344/C461 and C455/C465. N481 and N538 each carry an N-linked (GlcNAc...) asparagine; by host glycan. The cysteines at positions 531 and 542 are disulfide-linked.

Belongs to the paramyxoviruses hemagglutinin-neuraminidase family. In terms of assembly, homotetramer; composed of disulfide-linked homodimers. Interacts with F protein trimer. Interacts with host CG-1B; this interaction inhibits viral adsorption and replication rather than internalization.

It localises to the virion membrane. It is found in the host cell membrane. The enzyme catalyses Hydrolysis of alpha-(2-&gt;3)-, alpha-(2-&gt;6)-, alpha-(2-&gt;8)- glycosidic linkages of terminal sialic acid residues in oligosaccharides, glycoproteins, glycolipids, colominic acid and synthetic substrates.. In terms of biological role, mediates the viral entry into the host cell together with fusion/F protein. Attaches the virus to sialic acid-containing cell receptors and thereby initiates infection. Binding of HN protein to the receptor induces a conformational change that allows the F protein to trigger virion/cell membranes fusion. Neuraminidase activity ensures the efficient spread of the virus by dissociating the mature virions from the neuraminic acid containing glycoproteins. This Gallus gallus (Chicken) protein is Hemagglutinin-neuraminidase (HN).